The primary structure comprises 513 residues: Ribonuclease Y (513 aa).

A helical membrane pass occupies residues 6–26 (YIIIAVVIIIICVILGLYVVD). One can recognise a KH domain in the interval 203–288 (TVHVVNLPND…EMVEKAKKEV (86 aa)). In terms of domain architecture, HD spans 329-422 (VLKHSIEVSH…VQAADAISAA (94 aa)).

Belongs to the RNase Y family.

The protein resides in the cell membrane. In terms of biological role, endoribonuclease that initiates mRNA decay. In Clostridium botulinum (strain Langeland / NCTC 10281 / Type F), this protein is Ribonuclease Y.